We begin with the raw amino-acid sequence, 325 residues long: Protease HtpX homolog 2 (325 aa).

2 helical membrane passes run 10-30 and 41-61; these read LNMA…ALAV and VGLI…QWLF. Residue His147 coordinates Zn(2+). The active site involves Glu148. His151 lines the Zn(2+) pocket. 2 helical membrane passes run 159-179 and 196-216; these read LLMA…WLFW and LVFL…LLVL. A Zn(2+)-binding site is contributed by Glu223.

It belongs to the peptidase M48B family. It depends on Zn(2+) as a cofactor.

The protein resides in the cell membrane. In Saccharolobus solfataricus (strain ATCC 35092 / DSM 1617 / JCM 11322 / P2) (Sulfolobus solfataricus), this protein is Protease HtpX homolog 2.